The primary structure comprises 139 residues: Acidic phospholipase A2 Tgc-E6 (139 aa).

An N-terminal signal peptide occupies residues methionine 1–glycine 16. 7 disulfides stabilise this stretch: cysteine 42-cysteine 132, cysteine 44-cysteine 60, cysteine 59-cysteine 111, cysteine 65-cysteine 139, cysteine 66-cysteine 104, cysteine 73-cysteine 97, and cysteine 91-cysteine 102. Ca(2+) is bound by residues tyrosine 43, glycine 45, and glycine 47. Histidine 63 is an active-site residue. Position 64 (aspartate 64) interacts with Ca(2+). Aspartate 105 is an active-site residue.

The protein belongs to the phospholipase A2 family. Group II subfamily. D49 sub-subfamily. Monomer. Ca(2+) is required as a cofactor. Expressed by the venom gland.

The protein resides in the secreted. It carries out the reaction a 1,2-diacyl-sn-glycero-3-phosphocholine + H2O = a 1-acyl-sn-glycero-3-phosphocholine + a fatty acid + H(+). In terms of biological role, snake venom phospholipase A2 (PLA2) that inhibits the ADP-(IC(50)=272 nM) and collagen-induced (IC(50)=518 nM) human platelet aggregation in platelet rich plasma. Exhibits very high hydrolytic activities toward the synthetic lecithin, and prefers the anionic micelles (dPPC with deoxycholate) to the zwitterionic micelles (dPPC with Triton X-100). PLA2 catalyzes the calcium-dependent hydrolysis of the 2-acyl groups in 3-sn-phosphoglycerides. The sequence is that of Acidic phospholipase A2 Tgc-E6 from Trimeresurus gracilis (Kikuchi habu).